Here is an 877-residue protein sequence, read N- to C-terminus: SRP-independent targeting protein 1 (877 aa).

A phosphoserine mark is found at serine 309, serine 310, serine 311, serine 332, and serine 334. 3 disordered regions span residues 369-414 (LRKQ…PSND), 446-521 (DDYT…DVLS), and 550-579 (KPFNQKFPNSQQPDSAGASSPKRSTSSNHF). Low complexity predominate over residues 389–402 (RSQSYSSSNMSRSP). The stretch at 412–441 (SNDELVYDELNNQINEVQDRAKNEEIVLYN) forms a coiled coil. The span at 447 to 462 (DYTKERGEQEQDRTSY) shows a compositional bias: basic and acidic residues. A compositionally biased stretch (acidic residues) spans 470-501 (YDDEEGGNEDNYDDDEDDDDDDDDDDESDDEG). Composition is skewed to polar residues over residues 510–521 (LSRSGSSTDVLS) and 551–579 (PFNQKFPNSQQPDSAGASSPKRSTSSNHF). Glycyl lysine isopeptide (Lys-Gly) (interchain with G-Cter in ubiquitin) cross-links involve residues lysine 668 and lysine 670. Phosphoserine occurs at positions 692, 694, and 706. Residues 773-815 (SLPKEREDDNDSTNSTIVPNHPDNDNYNDNDNDNNTGINSNNF) form a disordered region. Positions 805 to 815 (DNNTGINSNNF) are enriched in low complexity. Serine 841 is subject to Phosphoserine.

In terms of assembly, interacts with ENV10/SND2.

The protein localises to the cytoplasm. In terms of biological role, functions in the SND pathway, a SRP (signal recognition particle) and GET (guided entry of tail-anchored proteins) independent pathway for targeting a broad range of substrate proteins to the endoplasmic reticulum. SND functions in parallel to GET in targeting proteins with downstream hydrophobic motifs. This Saccharomyces cerevisiae (strain ATCC 204508 / S288c) (Baker's yeast) protein is SRP-independent targeting protein 1.